The primary structure comprises 193 residues: Xanthine phosphoribosyltransferase (193 aa).

Leucine 20 and asparagine 27 together coordinate xanthine. 128–132 (ANGEA) lines the 5-phospho-alpha-D-ribose 1-diphosphate pocket. Lysine 156 contributes to the xanthine binding site.

Belongs to the purine/pyrimidine phosphoribosyltransferase family. Xpt subfamily. As to quaternary structure, homodimer.

Its subcellular location is the cytoplasm. It carries out the reaction XMP + diphosphate = xanthine + 5-phospho-alpha-D-ribose 1-diphosphate. It participates in purine metabolism; XMP biosynthesis via salvage pathway; XMP from xanthine: step 1/1. Converts the preformed base xanthine, a product of nucleic acid breakdown, to xanthosine 5'-monophosphate (XMP), so it can be reused for RNA or DNA synthesis. The chain is Xanthine phosphoribosyltransferase from Exiguobacterium sp. (strain ATCC BAA-1283 / AT1b).